We begin with the raw amino-acid sequence, 231 residues long: Cytochrome c oxidase subunit 2 (231 aa).

Residues 1–14 (MAHPAQLGLQNATS) lie on the Mitochondrial intermembrane side of the membrane. Residues 15-45 (PIMEELIAFHDHALMIIFLISSLVLYVISLM) traverse the membrane as a helical segment. The Mitochondrial matrix segment spans residues 46-59 (LTTKLTHTSTMNAQ). The chain crosses the membrane as a helical span at residues 60–87 (EIEMIWTILPAIILIMIALPSLRILYMT). Residues 88-231 (DEFNKPYLTL…WASYLYIVSL (144 aa)) lie on the Mitochondrial intermembrane side of the membrane. Positions 161, 196, 198, 200, 204, and 207 each coordinate Cu cation. Residue E198 coordinates Mg(2+).

The protein belongs to the cytochrome c oxidase subunit 2 family. As to quaternary structure, component of the cytochrome c oxidase (complex IV, CIV), a multisubunit enzyme composed of 14 subunits. The complex is composed of a catalytic core of 3 subunits MT-CO1, MT-CO2 and MT-CO3, encoded in the mitochondrial DNA, and 11 supernumerary subunits COX4I, COX5A, COX5B, COX6A, COX6B, COX6C, COX7A, COX7B, COX7C, COX8 and NDUFA4, which are encoded in the nuclear genome. The complex exists as a monomer or a dimer and forms supercomplexes (SCs) in the inner mitochondrial membrane with NADH-ubiquinone oxidoreductase (complex I, CI) and ubiquinol-cytochrome c oxidoreductase (cytochrome b-c1 complex, complex III, CIII), resulting in different assemblies (supercomplex SCI(1)III(2)IV(1) and megacomplex MCI(2)III(2)IV(2)). Found in a complex with TMEM177, COA6, COX18, COX20, SCO1 and SCO2. Interacts with TMEM177 in a COX20-dependent manner. Interacts with COX20. Interacts with COX16. It depends on Cu cation as a cofactor.

Its subcellular location is the mitochondrion inner membrane. It catalyses the reaction 4 Fe(II)-[cytochrome c] + O2 + 8 H(+)(in) = 4 Fe(III)-[cytochrome c] + 2 H2O + 4 H(+)(out). Functionally, component of the cytochrome c oxidase, the last enzyme in the mitochondrial electron transport chain which drives oxidative phosphorylation. The respiratory chain contains 3 multisubunit complexes succinate dehydrogenase (complex II, CII), ubiquinol-cytochrome c oxidoreductase (cytochrome b-c1 complex, complex III, CIII) and cytochrome c oxidase (complex IV, CIV), that cooperate to transfer electrons derived from NADH and succinate to molecular oxygen, creating an electrochemical gradient over the inner membrane that drives transmembrane transport and the ATP synthase. Cytochrome c oxidase is the component of the respiratory chain that catalyzes the reduction of oxygen to water. Electrons originating from reduced cytochrome c in the intermembrane space (IMS) are transferred via the dinuclear copper A center (CU(A)) of subunit 2 and heme A of subunit 1 to the active site in subunit 1, a binuclear center (BNC) formed by heme A3 and copper B (CU(B)). The BNC reduces molecular oxygen to 2 water molecules using 4 electrons from cytochrome c in the IMS and 4 protons from the mitochondrial matrix. The sequence is that of Cytochrome c oxidase subunit 2 (MT-CO2) from Alouatta palliata (Mantled howler monkey).